The chain runs to 222 residues: U-scoloptoxin(11)-Sm5a (222 aa).

This sequence belongs to the scoloptoxin-11 family. Post-translationally, contains 8 disulfide bonds. In terms of tissue distribution, expressed by the venom gland.

Its subcellular location is the secreted. The chain is U-scoloptoxin(11)-Sm5a from Scolopendra morsitans (Tanzanian blue ringleg centipede).